The primary structure comprises 196 residues: MSASRFIKCVTVGDGAVGKTCMLISYTSNTFPTDYVPTVFDNFSANVVVDGNTVNLGLWDTAGQEDYNRLRPLSYRGADVFILAFSLISKASYENVAKKWIPELRHYAPGVPIILVGTKLDLRDDKQFFIDHPGAVPITTNQGEELKKLIGSPIYIECSSKTQQNVKAVFDAAIKVVLQPPKQKKKKKNKNRCVFL.

16 to 21 (AVGKTC) contacts GTP. Residues 35-43 (YVPTVFDNF) carry the Effector region motif. Residues 119–121 (KLD) and 159–161 (SSK) each bind GTP. C193 bears the Cysteine methyl ester mark. C193 is lipidated: S-geranylgeranyl cysteine. The propeptide at 194-196 (VFL) is removed in mature form.

Belongs to the small GTPase superfamily. Rho family. In terms of assembly, interacts with GDI1 and ROPGEF8 homodimer. Binds to SPK1. In terms of tissue distribution, ubiquitous. Preferentially expressed at the tip of root hairs.

The protein localises to the cytoplasm. Its subcellular location is the membrane. It localises to the cell membrane. In terms of biological role, involved in cell polarity control during the actin-dependent tip growth of root hairs, thus regulating root hair length and root hair initiation. Functionally, inactive GDP-bound Rho GTPases reside in the cytosol, are found in a complex with Rho GDP-dissociation inhibitors (Rho GDIs), and are released from the GDI protein in order to translocate to membranes upon activation. The protein is Rac-like GTP-binding protein ARAC5 of Arabidopsis thaliana (Mouse-ear cress).